The primary structure comprises 226 residues: MMLHIPEVLTAAQVVEIRKTIDTAEWVDGKATVGAQGAKVKRNRQLPELSATGLKVGQEILKALAGHPLFVSAALPMRYMPPLFNRYEGGEHYGFHVDGSVRSIPGSNLSLRTDLSCTLFLSEPEEYEGGELVVADTYGEHAVKLPAGDMILYPASSVHKVEPVTHGARISSFFWVQSMVADDGKRGLLFELDQNIQKLRARLGDCEEIIGLTGHYHNLLRQWAMV.

In terms of domain architecture, Fe2OG dioxygenase spans 78–178 (RYMPPLFNRY…RISSFFWVQS (101 aa)). Fe cation contacts are provided by H96, D98, and H159. R169 provides a ligand contact to 2-oxoglutarate.

It depends on Fe(2+) as a cofactor. The cofactor is L-ascorbate.

The polypeptide is PKHD-type hydroxylase mma_3618 (Janthinobacterium sp. (strain Marseille) (Minibacterium massiliensis)).